We begin with the raw amino-acid sequence, 367 residues long: uncharacterized protein (367 aa).

Residues 8–28 (VLIGTFVLAAILAVFGFIYWL) traverse the membrane as a helical segment.

It is found in the membrane. This is an uncharacterized protein from Bradyrhizobium diazoefficiens (strain JCM 10833 / BCRC 13528 / IAM 13628 / NBRC 14792 / USDA 110).